The sequence spans 220 residues: MTITSLDGYRWLKNDIIRGNFQPDEKLRMSLLTSRYALGVGPLREALSQLVAERLVTVVNQKGYRVASMSEQELLDIFDARANMEAMLVSLAIARGGDEWEADVLAKAHLLSKLEACDASEKMLDEWDLRHQAFHTAIVAGCGSHYLLQMRERLFDLAARYRFIWLRRTVLSVEMLEDKHDQHQTLTAAVLARDTARASELMRQHLLTPIPIIQQAMAGN.

The 69-residue stretch at 1 to 69 (MTITSLDGYR…NQKGYRVASM (69 aa)) folds into the HTH gntR-type domain. Residues 29–48 (MSLLTSRYALGVGPLREALS) constitute a DNA-binding region (H-T-H motif).

The protein localises to the cytoplasm. With respect to regulation, the repressive effect at the glaH promoter site is specifically relieved upon glutarate binding. In terms of biological role, negatively regulates the expression of the glaH-lhgD-gabDTP operon in a temporal manner during entry into stationary phase or during the first few hours of carbon starvation. Thereby is involved in the regulation of a L-lysine degradation pathway that proceeds via cadaverine, glutarate and L-2-hydroxyglutarate. Binds to two primary and two secondary sites in the promoter region of the glaH operon with the consensus sequences TTGTN5TTTT and ATGTN5TTTT of the primary sites, each separated by six nucleotides. The polypeptide is HTH-type transcriptional repressor GlaR (Escherichia coli (strain K12)).